We begin with the raw amino-acid sequence, 644 residues long: Neurofilament medium polypeptide (644 aa).

Positions 1 to 33 (VKVELDKKVQSLQDEVAFLRTNHEEEVADLLAQ) are coil 1B. The IF rod domain maps to 1–197 (VKVELDKKVQ…KLLEGEETRF (197 aa)). Serine 11 bears the Phosphoserine mark. The interval 34–50 (IQASHITVERKDYLKTD) is linker 12. The interval 51–72 (ISSALKEIRSQLECHSDQNMHQ) is coil 2A. Positions 73–76 (AEEW) are linker 2. Residues 77 to 197 (FKCRYAKLTE…KLLEGEETRF (121 aa)) are coil 2B. Tyrosine 105 carries the post-translational modification Phosphotyrosine. Phosphoserine occurs at positions 131, 203, and 215. Residues 198 to 643 (STFSGSITGP…HAIVKEVTQS (446 aa)) are tail. Residue threonine 217 is glycosylated (O-linked (GlcNAc) threonine). Phosphoserine is present on residues serine 253 and serine 269. A disordered region spans residues 270-582 (VKEEEKEEEA…GGDRSEEKVV (313 aa)). The segment covering 274 to 292 (EKEEEAEGKEEEQEAEEEV) has biased composition (acidic residues). The residue at position 298 (serine 298) is a Phosphoserine. Residues 308–328 (KEEEGEKEEEGQEEEEEEEDE) show a composition bias toward acidic residues. Over residues 329 to 350 (GVKSDQAEEGGSEKEGSSKNEG) the composition is skewed to basic and acidic residues. Phosphoserine occurs at positions 332, 340, 345, and 346. A compositionally biased stretch (acidic residues) spans 351–368 (EQEEGETEAEGEVEEAEA). Threonine 357 carries the post-translational modification Phosphothreonine. The segment covering 369-400 (KEEKKTEEKSEEVAAKEEPVTEAKVGKPEKAK) has biased composition (basic and acidic residues). 4 positions are modified to phosphoserine: serine 401, serine 406, serine 442, and serine 465. The span at 422–470 (GEQKEEEEKVEEEKKKAAKESPKEEKVEKKEEKPKDVPKKKAESPVKEE) shows a compositional bias: basic and acidic residues. The segment covering 474-483 (EAATITKPTK) has biased composition (low complexity). The segment covering 485–508 (GLEKETKEGEKPLQQEKEKEKAGE) has biased composition (basic and acidic residues). A phosphoserine mark is found at serine 512, serine 550, and serine 566. The span at 545 to 557 (TKEKGSGREEEKG) shows a compositional bias: basic and acidic residues. Residues 568–582 (ADEKKGGDRSEEKVV) show a composition bias toward basic and acidic residues.

Belongs to the intermediate filament family. In terms of assembly, forms heterodimers with NEFL; which can further hetero-oligomerize (in vitro). Forms heterodimers with INA (in vitro). In terms of processing, there are a number of repeats of the tripeptide K-S-P, NFM is phosphorylated on a number of the serines in this motif. It is thought that phosphorylation of NFM results in the formation of interfilament cross bridges that are important in the maintenance of axonal caliber. Phosphorylation seems to play a major role in the functioning of the larger neurofilament polypeptides (NF-M and NF-H), the levels of phosphorylation being altered developmentally and coincidentally with a change in the neurofilament function. Post-translationally, phosphorylated in the head and rod regions by the PKC kinase PKN1, leading to the inhibition of polymerization.

Its subcellular location is the cytoplasm. It is found in the cytoskeleton. The protein resides in the cell projection. The protein localises to the axon. Its function is as follows. Neurofilaments usually contain three intermediate filament proteins: NEFL, NEFM, and NEFH which are involved in the maintenance of neuronal caliber. May additionally cooperate with the neuronal intermediate filament proteins PRPH and INA to form neuronal filamentous networks. This Oryctolagus cuniculus (Rabbit) protein is Neurofilament medium polypeptide (NEFM).